A 285-amino-acid polypeptide reads, in one-letter code: Probable endonuclease 4 (285 aa).

Zn(2+)-binding residues include H69, H109, E145, D179, H182, H216, D229, H231, and E261.

It belongs to the AP endonuclease 2 family. Requires Zn(2+) as cofactor.

The enzyme catalyses Endonucleolytic cleavage to 5'-phosphooligonucleotide end-products.. In terms of biological role, endonuclease IV plays a role in DNA repair. It cleaves phosphodiester bonds at apurinic or apyrimidinic (AP) sites, generating a 3'-hydroxyl group and a 5'-terminal sugar phosphate. In Salmonella newport (strain SL254), this protein is Probable endonuclease 4.